The chain runs to 273 residues: Undecaprenyl-diphosphatase (273 aa).

Transmembrane regions (helical) follow at residues 4–24 (LILI…FLPI), 43–63 (KAQV…CWEY), 82–102 (FVLN…LFIK), 108–128 (LFHP…ILWA), 183–203 (AAEF…FYDV), 217–237 (MFVV…RGFI), and 253–273 (IGFG…WSAG).

This sequence belongs to the UppP family.

Its subcellular location is the cell inner membrane. It catalyses the reaction di-trans,octa-cis-undecaprenyl diphosphate + H2O = di-trans,octa-cis-undecaprenyl phosphate + phosphate + H(+). In terms of biological role, catalyzes the dephosphorylation of undecaprenyl diphosphate (UPP). Confers resistance to bacitracin. The chain is Undecaprenyl-diphosphatase from Nitrosomonas eutropha (strain DSM 101675 / C91 / Nm57).